The primary structure comprises 260 residues: Achaete-scute homolog 2 (260 aa).

Disordered stretches follow at residues 85–126 and 191–239; these read AGAC…RNER and PATR…EDSS. Low complexity-rich tracts occupy residues 110–121 and 200–218; these read ATEASSSSAAVA and TQPS…STSP. The 53-residue stretch at 118-170 folds into the bHLH domain; that stretch reads AAVARRNERERNRVKLVNLGFQALRQHVPHGGANKKLSKVETLRSAVEYIRAL.

In terms of assembly, efficient DNA binding requires dimerization with another bHLH protein. Forms heterodimers with bHLH transcription factor TCF3. May not heterodimerise with bHLH protein HAND1. Expressed in Schwann cells in the peripheral nerve (at protein level). Also expressed by endothelial cells (at protein level). May be expressed in neuronal precursor cells.

The protein localises to the nucleus. Its subcellular location is the cytoplasm. Its function is as follows. Transcription factor. Binds to E-box motifs 5'-CANNTG-3' in the regulatory elements of target genes, probably as a heterodimer with another basic helix-loop-helix (bHLH) protein such as the transcription factor TCF3. May bind both open and closed chromatin, acting as a pioneer transcription factor to allow other factors to bind and activate lineage-specific genes. Required during post-implantation development for the generation of some differentiated trophoblast cell types. Transcriptional activity of ASCL2 may be antagonised in a subset of trophoblast cells by bHLH transcription factor HAND1, perhaps by competing for dimerization with other bHLH proteins. Involved in differentiation and function of follicular T-helper (Tfh) cells, thereby playing a role in germinal center responses; probably modulates expression of genes involved in Tfh cell function, such as BCL6. May also act as a suppressor of Th1-, Th2- and Th17-cell differentiation. Induces the formation of stem cells in intestinal crypts in vitro, synergistically activating transcription of target genes, such as SOX9, together with TCF4/beta-catenin. May form a bistable transcriptional switch, controlling expression of its own gene together with Wnt/R-spondin signaling, and thereby maintaining stem cell characteristics. Modulates expression of target genes, including perhaps down-regulating EGR1/Krox24 and chemokine CXCL10/Mob-1 and up-regulating CXCR4 and CDKN1C/p57kip2, in Schwann cells. May play a role in reducing proliferation of Schwann cells, perhaps acting via modulation of expression of CDKN1C. May be dispensable for blastocyst formation and later embryonic function. May be involved in the determination of neuronal precursors. The polypeptide is Achaete-scute homolog 2 (Ascl2) (Rattus norvegicus (Rat)).